We begin with the raw amino-acid sequence, 210 residues long: Thymidylate kinase (210 aa).

13 to 20 (GLEGAGKS) contacts ATP.

Belongs to the thymidylate kinase family.

It carries out the reaction dTMP + ATP = dTDP + ADP. Its function is as follows. Phosphorylation of dTMP to form dTDP in both de novo and salvage pathways of dTTP synthesis. In Shewanella loihica (strain ATCC BAA-1088 / PV-4), this protein is Thymidylate kinase.